The primary structure comprises 473 residues: Reticulon-4 receptor (473 aa).

Residues 1–26 (MKRASAGGSRLLAWVLWLQAWQVAAP) form the signal peptide. 2 disulfide bridges follow: Cys27/Cys33 and Cys31/Cys43. An LRRNT domain is found at 27-54 (CPGACVCYNEPKVTTSCPQQGLQAVPVG). LRR repeat units follow at residues 55–79 (IPAA…SFRA), 81–103 (RNLT…AFTG), 104–128 (LALL…TFHG), 129–152 (LGRL…LFRG), 153–176 (LAAL…TFRD), 178–200 (GNLT…AFRG), 202–224 (HSLD…AFRD), 225–248 (LGRL…ALAP), and 250–273 (RALQ…PLWA). Asn82 carries N-linked (GlcNAc...) asparagine glycosylation. An N-linked (GlcNAc...) asparagine glycan is attached at Asn179. An LRRCT domain is found at 260-310 (NPWVCDCRARPLWAWLQKFRGSSSEVPCSLPQRLAGRDLKRLAANDLQGCA). 3 cysteine pairs are disulfide-bonded: Cys264–Cys287, Cys266–Cys335, and Cys309–Cys336. The disordered stretch occupies residues 346–447 (VLEPGRPASA…GGGTGDSEGS (102 aa)). A compositionally biased stretch (basic residues) spans 413-429 (PRRRPGCSRKNRTRSHC). The segment covering 434-445 (AGSGGGGTGDSE) has biased composition (gly residues). Ser447 carries GPI-anchor amidated serine lipidation. The propeptide at 448–473 (GALPSLTCSLTPLGLALVLWTVLGPC) is removed in mature form.

The protein belongs to the Nogo receptor family. As to quaternary structure, homodimer. Interacts with MAG. Interacts with RTN4. Interacts with NGFR. Interacts with LINGO1. Interacts with KIAA0319L. Interacts with OLFM1; this inhibits interaction with LINGO1 and NGFR. Interacts with OMG. N-glycosylated. O-glycosylated. Contains terminal sialic acid groups on its glycan chains. As to expression, widespread in the brain but highest levels in the gray matter. Low levels in heart and kidney; not expressed in oligodendrocytes (white matter).

It is found in the cell membrane. The protein resides in the membrane raft. It localises to the cell projection. The protein localises to the dendrite. Its subcellular location is the axon. It is found in the perikaryon. Functionally, receptor for RTN4, OMG and MAG. Functions as a receptor for the sialylated gangliosides GT1b and GM1. Besides, functions as a receptor for chondroitin sulfate proteoglycans. Can also bind heparin. Intracellular signaling cascades are triggered via the coreceptor NGFR. Signaling mediates activation of Rho and downstream reorganization of the actin cytoskeleton. Mediates axonal growth inhibition. Plays a role in regulating axon regeneration and neuronal plasticity in the adult central nervous system. Plays a role in postnatal brain development. Required for normal axon migration across the brain midline and normal formation of the corpus callosum. Protects motoneurons against apoptosis; protection against apoptosis is probably mediated via interaction with MAG. Acts in conjunction with RTN4 and LINGO1 in regulating neuronal precursor cell motility during cortical development. Like other family members, plays a role in restricting the number dendritic spines and the number of synapses that are formed during brain development. The chain is Reticulon-4 receptor (RTN4R) from Homo sapiens (Human).